Consider the following 482-residue polypeptide: Putative fatty acid desaturase 2-like protein FADS2B (482 aa).

A disordered region spans residues 1 to 31 (MKFEEKCGDNGSIVGRNQSYPGEKHQPKGKP). At 1 to 167 (MKFEEKCGDN…EAMNMFHANL (167 aa)) the chain is on the cytoplasmic side. The 77-residue stretch at 56–132 (LSMYTWLEIQ…LKPLLIGELA (77 aa)) folds into the Cytochrome b5 heme-binding domain. His-90 and His-113 together coordinate heme. The chain crosses the membrane as a helical span at residues 168–188 (GFFFLHFVQILILEVLAWLIV). Over 189–190 (YH) the chain is Lumenal. A helical transmembrane segment spans residues 191-211 (FGSGWPVTMFISFLLTISQAS). Residues 212–305 (SSFLQHDAGH…YEEQHLYFYK (94 aa)) are Cytoplasmic-facing. Positions 217–221 (HDAGH) match the Histidine box-1 motif. Residues 254–258 (HFEQH) carry the Histidine box-2 motif. A helical transmembrane segment spans residues 306-326 (VWLPLFMPVYLKLPSMQAMYL). The Lumenal portion of the chain corresponds to 327-343 (QRYWVCFSLQDITWVSS). Residues 344 to 364 (FYIYFITFGLYYGIFGTMLLI) form a helical membrane-spanning segment. Over 365-482 (YLVKFLESPW…AALWADAYYE (118 aa)) the chain is Cytoplasmic. The short motif at 421–425 (QIEHH) is the Histidine box-3 element.

The protein belongs to the fatty acid desaturase type 1 family.

The protein localises to the endoplasmic reticulum membrane. It participates in lipid metabolism; polyunsaturated fatty acid biosynthesis. The chain is Putative fatty acid desaturase 2-like protein FADS2B from Homo sapiens (Human).